Here is a 317-residue protein sequence, read N- to C-terminus: Ribosomal protein L11 methyltransferase (317 aa).

S-adenosyl-L-methionine-binding residues include threonine 158, glycine 179, aspartate 201, and asparagine 244.

It belongs to the methyltransferase superfamily. PrmA family.

The protein localises to the cytoplasm. The catalysed reaction is L-lysyl-[protein] + 3 S-adenosyl-L-methionine = N(6),N(6),N(6)-trimethyl-L-lysyl-[protein] + 3 S-adenosyl-L-homocysteine + 3 H(+). In terms of biological role, methylates ribosomal protein L11. In Streptococcus pyogenes serotype M3 (strain ATCC BAA-595 / MGAS315), this protein is Ribosomal protein L11 methyltransferase.